Consider the following 693-residue polypeptide: Endoprotease bli (693 aa).

The N-terminal stretch at 1 to 20 (MYWQLVRILVLFDCLQKILA) is a signal peptide. The propeptide at 21–116 (IEHDSICIAD…EQRPRVRRKR (96 aa)) is inhibition peptide. Asp161 is a Ca(2+) binding site. The region spanning 167-482 (QWYLNNGAQG…YGLMDAGALV (316 aa)) is the Peptidase S8 domain. Asn194 is a glycosylation site (N-linked (GlcNAc...) asparagine). Asp201 functions as the Charge relay system in the catalytic mechanism. Residue Asp202 coordinates substrate. 4 residues coordinate Ca(2+): Asp210, Asp222, Asp227, and Asp229. Residues 215–242 (YDPLASTDINGHDDDPTPQDDGDNKHGT) are disordered. 237 to 238 (DN) is a binding site for substrate. His240 (charge relay system) is an active-site residue. Residues Ile251, Asn254, Tyr256, and Gly258 each coordinate Ca(2+). Intrachain disulfides connect Cys257-Cys406 and Cys349-Cys379. Residues Glu282, 299 to 304 (SWGPED), Asp310, and 338 to 341 (ASGN) each bind substrate. Residue Asp304 participates in Ca(2+) binding. Asp347 contributes to the Ca(2+) binding site. Residues Asp352 and Tyr354 each contribute to the substrate site. A Ca(2+)-binding site is contributed by Glu377. The active-site Charge relay system is the Ser414. Ser414 is a substrate binding site. Residues Asn433 and Asn518 are each glycosylated (N-linked (GlcNAc...) asparagine). Residues 490-628 (TVPEQHICTY…SLLLYGTAEP (139 aa)) enclose the P/Homo B domain. A disulfide bridge connects residues Cys497 and Cys526. Residues 629–693 (AQPNDPRHSS…LVSAQPELRV (65 aa)) form a disordered region. A compositionally biased stretch (basic and acidic residues) spans 668-681 (DSRDWQPKKVENKK).

Belongs to the peptidase S8 family. Furin subfamily. Ca(2+) is required as a cofactor. N-glycosylated. In terms of processing, the inhibition peptide, which plays the role of an intramolecular chaperone, is probably autocatalytically removed in the endoplasmic reticulum (ER) and remains non-covalently bound as a potent autoinhibitor. Probably following transport to the trans Golgi, a second cleavage within the inhibition propeptide results in propeptide dissociation and bli activation.

Its subcellular location is the secreted. It carries out the reaction Release of mature proteins from their proproteins by cleavage of -Arg-Xaa-Yaa-Arg-|-Zaa- bonds, where Xaa can be any amino acid and Yaa is Arg or Lys. Releases albumin, complement component C3 and von Willebrand factor from their respective precursors.. With respect to regulation, inhibited by the propeptide before the second cleavage. Inhibited by ethylenediaminetetraacetic acid (EDTA), ZnSO(4) and chloroketone DEC-RVKR-CMK. Functionally, serine endoprotease which cleaves substrates at the RX(K/R)R consensus motif. The protein is Endoprotease bli of Onchocerca volvulus.